Here is a 968-residue protein sequence, read N- to C-terminus: Putative pectinesterase/pectinesterase inhibitor 26 (968 aa).

A helical transmembrane segment spans residues 33-53; that stretch reads IGISVAVLVAIIISSTVTIAI. Positions 71-230 are pectinesterase inhibitor 26 A; the sequence is LTPAASLKTV…TEFTSNSLAI (160 aa). N-linked (GlcNAc...) asparagine glycans are attached at residues N101, N158, N219, N295, N352, N400, N464, N541, N559, and N603. Residues 265–430 form a pectinesterase inhibitor 26 B region; it reads LTPAASLRNV…RKFTSNSLAI (166 aa). Residues 453 to 614 are pectinesterase inhibitor 26 C; the sequence is PTPSSVLRTV…TEFTSNSLAI (162 aa). A pectinesterase 26 region spans residues 660–954; the sequence is HVTVAADGSG…FTVKYFLRGD (295 aa). T735 is a binding site for substrate. N737 is a glycosylation site (N-linked (GlcNAc...) asparagine). Q765 is a substrate binding site. The active-site Proton donor; for pectinesterase activity is the D788. A disulfide bond links C802 and C822. D809 functions as the Nucleophile; for pectinesterase activity in the catalytic mechanism. A glycan (N-linked (GlcNAc...) asparagine) is linked at N863. Substrate is bound by residues R872 and W874. The N-linked (GlcNAc...) asparagine glycan is linked to N900.

In the N-terminal section; belongs to the PMEI family. It in the C-terminal section; belongs to the pectinesterase family. Expressed in flowers.

Its subcellular location is the membrane. It carries out the reaction [(1-&gt;4)-alpha-D-galacturonosyl methyl ester](n) + n H2O = [(1-&gt;4)-alpha-D-galacturonosyl](n) + n methanol + n H(+). It participates in glycan metabolism; pectin degradation; 2-dehydro-3-deoxy-D-gluconate from pectin: step 1/5. Functionally, acts in the modification of cell walls via demethylesterification of cell wall pectin. The polypeptide is Putative pectinesterase/pectinesterase inhibitor 26 (PME26) (Arabidopsis thaliana (Mouse-ear cress)).